Here is a 423-residue protein sequence, read N- to C-terminus: Gamma-glutamyl phosphate reductase (423 aa).

It belongs to the gamma-glutamyl phosphate reductase family.

The protein resides in the cytoplasm. The enzyme catalyses L-glutamate 5-semialdehyde + phosphate + NADP(+) = L-glutamyl 5-phosphate + NADPH + H(+). The protein operates within amino-acid biosynthesis; L-proline biosynthesis; L-glutamate 5-semialdehyde from L-glutamate: step 2/2. Functionally, catalyzes the NADPH-dependent reduction of L-glutamate 5-phosphate into L-glutamate 5-semialdehyde and phosphate. The product spontaneously undergoes cyclization to form 1-pyrroline-5-carboxylate. This Burkholderia orbicola (strain MC0-3) protein is Gamma-glutamyl phosphate reductase.